The sequence spans 445 residues: Exodeoxyribonuclease 7 large subunit (445 aa).

This sequence belongs to the XseA family. As to quaternary structure, heterooligomer composed of large and small subunits.

It is found in the cytoplasm. The catalysed reaction is Exonucleolytic cleavage in either 5'- to 3'- or 3'- to 5'-direction to yield nucleoside 5'-phosphates.. Functionally, bidirectionally degrades single-stranded DNA into large acid-insoluble oligonucleotides, which are then degraded further into small acid-soluble oligonucleotides. The sequence is that of Exodeoxyribonuclease 7 large subunit from Staphylococcus aureus (strain bovine RF122 / ET3-1).